The primary structure comprises 271 residues: Non-homologous end joining protein Ku (271 aa).

Residues 12–194 (KLSLVTCPVV…DQKPVPELLS (183 aa)) enclose the Ku domain. Positions 225 to 249 (EAKKTPPAKKTKAEEKTGKGSAESN) are disordered.

Belongs to the prokaryotic Ku family. Homodimer. Interacts with LigD.

Functionally, with LigD forms a non-homologous end joining (NHEJ) DNA repair enzyme, which repairs dsDNA breaks with reduced fidelity. Binds linear dsDNA with 5'- and 3'- overhangs but not closed circular dsDNA nor ssDNA. Recruits and stimulates the ligase activity of LigD. The chain is Non-homologous end joining protein Ku from Methylocella silvestris (strain DSM 15510 / CIP 108128 / LMG 27833 / NCIMB 13906 / BL2).